A 432-amino-acid chain; its full sequence is Adenylosuccinate synthetase (432 aa).

Residues 13 to 19 (GDEGKGK) and 41 to 43 (GHT) each bind GTP. Asp14 functions as the Proton acceptor in the catalytic mechanism. Mg(2+) is bound by residues Asp14 and Gly41. Residues 14–17 (DEGK), 39–42 (NAGH), Thr130, Arg144, Gln225, Thr240, and Arg304 contribute to the IMP site. The active-site Proton donor is His42. 300 to 306 (AVTGRPR) is a substrate binding site. GTP-binding positions include Arg306, 332–334 (KLD), and 415–417 (STG).

Belongs to the adenylosuccinate synthetase family. In terms of assembly, homodimer. Requires Mg(2+) as cofactor.

Its subcellular location is the cytoplasm. The catalysed reaction is IMP + L-aspartate + GTP = N(6)-(1,2-dicarboxyethyl)-AMP + GDP + phosphate + 2 H(+). It functions in the pathway purine metabolism; AMP biosynthesis via de novo pathway; AMP from IMP: step 1/2. In terms of biological role, plays an important role in the de novo pathway of purine nucleotide biosynthesis. Catalyzes the first committed step in the biosynthesis of AMP from IMP. This chain is Adenylosuccinate synthetase, found in Haemophilus influenzae (strain ATCC 51907 / DSM 11121 / KW20 / Rd).